The chain runs to 265 residues: MIKWPWKVQESAHQTALPWQEALSIPLLTGLTEQEQSKLVTLAERFLQQKRLVPLQGFELDSLRSCRIALLFCLPVLELGLEWLDGFHEVLIYPAPFVVDDEWEDDIGLVHNQRIVQSGQSWQQGPIVLNWLDIQDSFDASGFNLIIHEVAHKLDTRNGDRASGVPFIPLREVAGWEHDLHAAMNNIQEEIELVGENAASIDAYAASDPAECFAVLSEYFFSAPELFAPRFPSLWQRFCQFYQQDPLQRLHRTNDTDSFSATNVH.

Zn(2+)-binding residues include His-111, His-148, His-152, and Glu-211.

This sequence belongs to the MtfA family. Interacts with Mlc. Zn(2+) is required as a cofactor.

Its subcellular location is the cytoplasm. Involved in the modulation of the activity of the glucose-phosphotransferase system (glucose-PTS). Interacts with the transcriptional repressor Mlc, preventing its interaction with DNA and leading to the modulation of expression of genes regulated by Mlc, including ptsG, which encodes the PTS system glucose-specific EIICB component. Functionally, shows zinc-dependent metallopeptidase activity. This chain is Mlc titration factor A, found in Escherichia coli O9:H4 (strain HS).